Consider the following 698-residue polypeptide: Elongation factor G (698 aa).

Positions 10–285 (DKTRNIGIMA…AVVDYLPSPL (276 aa)) constitute a tr-type G domain. GTP is bound by residues 19–26 (AHIDAGKT), 83–87 (DTPGH), and 137–140 (NKMD).

It belongs to the TRAFAC class translation factor GTPase superfamily. Classic translation factor GTPase family. EF-G/EF-2 subfamily.

The protein localises to the cytoplasm. Catalyzes the GTP-dependent ribosomal translocation step during translation elongation. During this step, the ribosome changes from the pre-translocational (PRE) to the post-translocational (POST) state as the newly formed A-site-bound peptidyl-tRNA and P-site-bound deacylated tRNA move to the P and E sites, respectively. Catalyzes the coordinated movement of the two tRNA molecules, the mRNA and conformational changes in the ribosome. The sequence is that of Elongation factor G from Lactiplantibacillus plantarum (strain ATCC BAA-793 / NCIMB 8826 / WCFS1) (Lactobacillus plantarum).